Reading from the N-terminus, the 571-residue chain is E3 ubiquitin-protein ligase RNF168 (571 aa).

An RING-type zinc finger spans residues 16-55 (CGICMEILVEPVTLPCNHTLCKPCFQSTVEKASLCCPFCR). Serine 70 bears the Phosphoserine mark. An LR motif 1 motif is present at residues 110-128 (LSKPGELRREYEEEISKVA). Serine 134 carries the phosphoserine modification. The UMI motif motif lies at 143-151 (EEYIQRLLA). Disordered regions lie at residues 151-174 (AEEE…QLKS) and 191-292 (EGSI…GADS). The MIU motif 1 motif lies at 168 to 191 (MEEQLKSDEELARKLSIDINNFCE). Serine 197 carries the post-translational modification Phosphoserine. Basic and acidic residues predominate over residues 202–214 (RKSDPVTPKSEKK). A Glycyl lysine isopeptide (Lys-Gly) (interchain with G-Cter in SUMO2) cross-link involves residue lysine 210. Residues 231–242 (PKSQFGSASHSE) are compositionally biased toward polar residues. Residues 243–263 (AVQEVRKDSVSKDIDSSDRKS) show a composition bias toward basic and acidic residues. Position 362 is a phosphothreonine (threonine 362). Disordered stretches follow at residues 390–422 (NQES…EETE) and 459–560 (KEQM…ISQK). Residues serine 411, serine 414, and serine 415 each carry the phosphoserine modification. Positions 439-462 (RHKQEEQDRLLALQLQKEVDKEQM) match the MIU motif 2 motif. The short motif at 466 to 477 (RQKGSPDEYHLR) is the LR motif 2 element. At serine 470 the chain carries Phosphoserine. A compositionally biased stretch (basic and acidic residues) spans 508–519 (PTPERGSRDKNR). 2 stretches are compositionally biased toward polar residues: residues 520-530 (QVSLKMQLKQS) and 549-560 (SAHSLQPSISQK). Lysine 528 is covalently cross-linked (Glycyl lysine isopeptide (Lys-Gly) (interchain with G-Cter in SUMO2)).

This sequence belongs to the RNF168 family. As to quaternary structure, monomer. Interacts with UBE2N/UBC13. Post-translationally, sumoylated with SUMO1 by PIAS4 in response to double-strand breaks (DSBs). Ubiquitinated.

The protein resides in the nucleus. The catalysed reaction is S-ubiquitinyl-[E2 ubiquitin-conjugating enzyme]-L-cysteine + [acceptor protein]-L-lysine = [E2 ubiquitin-conjugating enzyme]-L-cysteine + N(6)-ubiquitinyl-[acceptor protein]-L-lysine.. Its pathway is protein modification; protein ubiquitination. Functionally, E3 ubiquitin-protein ligase required for accumulation of repair proteins to sites of DNA damage. Acts with UBE2N/UBC13 to amplify the RNF8-dependent histone ubiquitination. Recruited to sites of DNA damage at double-strand breaks (DSBs) by binding to ubiquitinated histone H2A and H2AX and amplifies the RNF8-dependent H2A ubiquitination, promoting the formation of 'Lys-63'-linked ubiquitin conjugates. This leads to concentrate ubiquitinated histones H2A and H2AX at DNA lesions to the threshold required for recruitment of TP53BP1 and BRCA1. Also recruited at DNA interstrand cross-links (ICLs) sites and promotes accumulation of 'Lys-63'-linked ubiquitination of histones H2A and H2AX, leading to recruitment of FAAP20/C1orf86 and Fanconi anemia (FA) complex, followed by interstrand cross-link repair. H2A ubiquitination also mediates the ATM-dependent transcriptional silencing at regions flanking DSBs in cis, a mechanism to avoid collision between transcription and repair intermediates. Also involved in class switch recombination in immune system, via its role in regulation of DSBs repair. Following DNA damage, promotes the ubiquitination and degradation of JMJD2A/KDM4A in collaboration with RNF8, leading to unmask H4K20me2 mark and promote the recruitment of TP53BP1 at DNA damage sites. Not able to initiate 'Lys-63'-linked ubiquitination in vitro; possibly due to partial occlusion of the UBE2N/UBC13-binding region. Catalyzes monoubiquitination of 'Lys-13' and 'Lys-15' of nucleosomal histone H2A (H2AK13Ub and H2AK15Ub, respectively). This is E3 ubiquitin-protein ligase RNF168 from Homo sapiens (Human).